Reading from the N-terminus, the 276-residue chain is Expansin-like A3 (276 aa).

An N-terminal signal peptide occupies residues 1 to 28; sequence MAVLLSILSSSFLLLLAASSSSTPRASA. The Expansin-like EG45 domain maps to 52–158; that stretch reads GGGCGYGAMA…RRIPCDYKDK (107 aa). 2 N-linked (GlcNAc...) asparagine glycosylation sites follow: Asn115 and Asn159. In terms of domain architecture, Expansin-like CBD spans 172–255; the sequence is NNLVIKFLYQ…NWQPGQVYDT (84 aa).

It belongs to the expansin family. Expansin-like A subfamily.

It localises to the secreted. This is Expansin-like A3 (EXLA3) from Oryza sativa subsp. japonica (Rice).